The primary structure comprises 461 residues: Fumarate hydratase class II (461 aa).

Substrate contacts are provided by residues 98-100 (SGT), 129-132 (HPND), 139-141 (SSN), and Thr-187. Residues 120 to 140 (SKKGGKSPVHPNDHVNKGQSS) are disordered. His-188 serves as the catalytic Proton donor/acceptor. The active site involves Ser-318. Substrate is bound by residues Ser-319 and 324–326 (KVN).

The protein belongs to the class-II fumarase/aspartase family. Fumarase subfamily. Homotetramer.

Its subcellular location is the cytoplasm. It carries out the reaction (S)-malate = fumarate + H2O. It participates in carbohydrate metabolism; tricarboxylic acid cycle; (S)-malate from fumarate: step 1/1. Functionally, involved in the TCA cycle. Catalyzes the stereospecific interconversion of fumarate to L-malate. This chain is Fumarate hydratase class II, found in Rickettsia felis (strain ATCC VR-1525 / URRWXCal2) (Rickettsia azadi).